A 510-amino-acid chain; its full sequence is Bifunctional purine biosynthesis protein PurH (510 aa).

Residues 1-142 (MRALISVSDK…KNFKDVLIVT (142 aa)) form the MGS-like domain.

The protein belongs to the PurH family.

It catalyses the reaction (6R)-10-formyltetrahydrofolate + 5-amino-1-(5-phospho-beta-D-ribosyl)imidazole-4-carboxamide = 5-formamido-1-(5-phospho-D-ribosyl)imidazole-4-carboxamide + (6S)-5,6,7,8-tetrahydrofolate. The catalysed reaction is IMP + H2O = 5-formamido-1-(5-phospho-D-ribosyl)imidazole-4-carboxamide. The protein operates within purine metabolism; IMP biosynthesis via de novo pathway; 5-formamido-1-(5-phospho-D-ribosyl)imidazole-4-carboxamide from 5-amino-1-(5-phospho-D-ribosyl)imidazole-4-carboxamide (10-formyl THF route): step 1/1. It functions in the pathway purine metabolism; IMP biosynthesis via de novo pathway; IMP from 5-formamido-1-(5-phospho-D-ribosyl)imidazole-4-carboxamide: step 1/1. This is Bifunctional purine biosynthesis protein PurH from Campylobacter curvus (strain 525.92).